The chain runs to 292 residues: Phosphatidylglycerol--prolipoprotein diacylglyceryl transferase (292 aa).

The next 7 helical transmembrane spans lie at 25–45 (ITLH…WWYA), 70–90 (FVVW…VLVW), 102–122 (IIAV…IIIA), 138–158 (FDII…CNFI), 193–213 (FMEG…FKAF), 217–237 (GTVS…SEVY), and 255–275 (GFTY…YLLL). Position 153 (R153) interacts with a 1,2-diacyl-sn-glycero-3-phospho-(1'-sn-glycerol).

Belongs to the Lgt family.

The protein resides in the cell inner membrane. It carries out the reaction L-cysteinyl-[prolipoprotein] + a 1,2-diacyl-sn-glycero-3-phospho-(1'-sn-glycerol) = an S-1,2-diacyl-sn-glyceryl-L-cysteinyl-[prolipoprotein] + sn-glycerol 1-phosphate + H(+). It participates in protein modification; lipoprotein biosynthesis (diacylglyceryl transfer). Its function is as follows. Catalyzes the transfer of the diacylglyceryl group from phosphatidylglycerol to the sulfhydryl group of the N-terminal cysteine of a prolipoprotein, the first step in the formation of mature lipoproteins. This Bartonella tribocorum (strain CIP 105476 / IBS 506) protein is Phosphatidylglycerol--prolipoprotein diacylglyceryl transferase.